The primary structure comprises 326 residues: Nicotianamine synthase 2 (326 aa).

It belongs to the nicotianamine synthase (NAS)-like family. In terms of tissue distribution, expressed in roots.

The catalysed reaction is 3 S-adenosyl-L-methionine = nicotianamine + 3 S-methyl-5'-thioadenosine + 3 H(+). Its function is as follows. Synthesizes nicotianamine, a polyamine that is the first intermediate in the synthesis of the phytosiderophores of the mugineic acid type found in gramineae which serve as a sensor for the physiological iron status within the plant, and/or might be involved in the transport of iron. In Oryza sativa subsp. indica (Rice), this protein is Nicotianamine synthase 2 (NAS2).